The primary structure comprises 154 residues: ATP synthase subunit b (154 aa).

Residues 9-29 (AIAFVIFVWFCMKYVWPPLMA) traverse the membrane as a helical segment.

Belongs to the ATPase B chain family. As to quaternary structure, F-type ATPases have 2 components, F(1) - the catalytic core - and F(0) - the membrane proton channel. F(1) has five subunits: alpha(3), beta(3), gamma(1), delta(1), epsilon(1). F(0) has three main subunits: a(1), b(2) and c(10-14). The alpha and beta chains form an alternating ring which encloses part of the gamma chain. F(1) is attached to F(0) by a central stalk formed by the gamma and epsilon chains, while a peripheral stalk is formed by the delta and b chains.

The protein localises to the cell inner membrane. Functionally, f(1)F(0) ATP synthase produces ATP from ADP in the presence of a proton or sodium gradient. F-type ATPases consist of two structural domains, F(1) containing the extramembraneous catalytic core and F(0) containing the membrane proton channel, linked together by a central stalk and a peripheral stalk. During catalysis, ATP synthesis in the catalytic domain of F(1) is coupled via a rotary mechanism of the central stalk subunits to proton translocation. Its function is as follows. Component of the F(0) channel, it forms part of the peripheral stalk, linking F(1) to F(0). The polypeptide is ATP synthase subunit b (Klebsiella pneumoniae subsp. pneumoniae (strain ATCC 700721 / MGH 78578)).